The primary structure comprises 944 residues: 2-oxoglutarate dehydrogenase E1 component (944 aa).

The disordered stretch occupies residues 915 to 944 (RRRSSPAEGDPTVHKKEQERIVSDSLTRKN). Basic and acidic residues predominate over residues 925-936 (PTVHKKEQERIV).

The protein belongs to the alpha-ketoglutarate dehydrogenase family. In terms of assembly, homodimer. Part of the 2-oxoglutarate dehydrogenase (OGDH) complex composed of E1 (2-oxoglutarate dehydrogenase), E2 (dihydrolipoamide succinyltransferase) and E3 (dihydrolipoamide dehydrogenase); the complex contains multiple copies of the three enzymatic components (E1, E2 and E3). The cofactor is thiamine diphosphate.

The catalysed reaction is N(6)-[(R)-lipoyl]-L-lysyl-[protein] + 2-oxoglutarate + H(+) = N(6)-[(R)-S(8)-succinyldihydrolipoyl]-L-lysyl-[protein] + CO2. Functionally, E1 component of the 2-oxoglutarate dehydrogenase (OGDH) complex which catalyzes the decarboxylation of 2-oxoglutarate, the first step in the conversion of 2-oxoglutarate to succinyl-CoA and CO(2). The protein is 2-oxoglutarate dehydrogenase E1 component of Bacillus velezensis (strain DSM 23117 / BGSC 10A6 / LMG 26770 / FZB42) (Bacillus amyloliquefaciens subsp. plantarum).